A 261-amino-acid chain; its full sequence is Phosphatidylglycerol--prolipoprotein diacylglyceryl transferase (261 aa).

The next 7 membrane-spanning stretches (helical) occupy residues 19 to 39, 56 to 76, 92 to 112, 126 to 146, 173 to 193, 199 to 219, and 227 to 247; these read VHWY…LALY, LIFY…MLFY, WRGG…TWIF, FVVP…FING, QLYE…WFSA, FAVS…AEFF, and GFVA…MIII. Position 139 (R139) interacts with a 1,2-diacyl-sn-glycero-3-phospho-(1'-sn-glycerol).

It belongs to the Lgt family.

It localises to the cell inner membrane. The catalysed reaction is L-cysteinyl-[prolipoprotein] + a 1,2-diacyl-sn-glycero-3-phospho-(1'-sn-glycerol) = an S-1,2-diacyl-sn-glyceryl-L-cysteinyl-[prolipoprotein] + sn-glycerol 1-phosphate + H(+). It functions in the pathway protein modification; lipoprotein biosynthesis (diacylglyceryl transfer). Functionally, catalyzes the transfer of the diacylglyceryl group from phosphatidylglycerol to the sulfhydryl group of the N-terminal cysteine of a prolipoprotein, the first step in the formation of mature lipoproteins. This chain is Phosphatidylglycerol--prolipoprotein diacylglyceryl transferase, found in Coxiella burnetii (strain CbuK_Q154) (Coxiella burnetii (strain Q154)).